Consider the following 190-residue polypeptide: Probable E3 ubiquitin-protein ligase RHB1A (190 aa).

The segment at 139-180 (CPICFEDYDVENPRLTTKCEHEFHLSCLLEWIERSDRCPICD) adopts an RING-type; atypical zinc-finger fold.

The enzyme catalyses S-ubiquitinyl-[E2 ubiquitin-conjugating enzyme]-L-cysteine + [acceptor protein]-L-lysine = [E2 ubiquitin-conjugating enzyme]-L-cysteine + N(6)-ubiquitinyl-[acceptor protein]-L-lysine.. Its pathway is protein modification; protein ubiquitination. Probable E3 ubiquitin-protein ligase that may possess E3 ubiquitin ligase activity in vitro. The sequence is that of Probable E3 ubiquitin-protein ligase RHB1A from Arabidopsis thaliana (Mouse-ear cress).